The sequence spans 510 residues: Bifunctional pantoate ligase/cytidylate kinase (510 aa).

Residues 1–276 (MKKVIIRKTE…CGETRLIDHV (276 aa)) are pantoate--beta-alanine ligase. 29-36 (MGNLHNGH) contributes to the ATP binding site. The active-site Proton donor is the His-36. Gln-61 lines the (R)-pantoate pocket. Gln-61 provides a ligand contact to beta-alanine. 150 to 153 (GEKD) contributes to the ATP binding site. Gln-156 lines the (R)-pantoate pocket. 187 to 190 (LSSR) serves as a coordination point for ATP. Residues 277-510 (FLMKRRPIIA…DKIPKETEIK (234 aa)) are cytidylate kinase.

The protein in the N-terminal section; belongs to the pantothenate synthetase family. This sequence in the C-terminal section; belongs to the cytidylate kinase family. Type 1 subfamily.

The protein localises to the cytoplasm. The enzyme catalyses (R)-pantoate + beta-alanine + ATP = (R)-pantothenate + AMP + diphosphate + H(+). It carries out the reaction CMP + ATP = CDP + ADP. The catalysed reaction is dCMP + ATP = dCDP + ADP. It functions in the pathway cofactor biosynthesis; (R)-pantothenate biosynthesis; (R)-pantothenate from (R)-pantoate and beta-alanine: step 1/1. Functionally, catalyzes the condensation of pantoate with beta-alanine in an ATP-dependent reaction via a pantoyl-adenylate intermediate. Catalyzes the transfer of a phosphate group from ATP to either CMP or dCMP to form CDP or dCDP and ADP, respectively. The sequence is that of Bifunctional pantoate ligase/cytidylate kinase from Prochlorococcus marinus (strain MIT 9215).